The chain runs to 77 residues: NAD(P)H-quinone oxidoreductase subunit L (77 aa).

Helical transmembrane passes span 12–32 (LVAYVGIVSIYLLVIPLILFY) and 47–67 (LIVYGLVFLFFPGLILFSPFL).

This sequence belongs to the complex I NdhL subunit family. As to quaternary structure, NDH-1 can be composed of about 15 different subunits; different subcomplexes with different compositions have been identified which probably have different functions.

The protein resides in the cellular thylakoid membrane. The catalysed reaction is a plastoquinone + NADH + (n+1) H(+)(in) = a plastoquinol + NAD(+) + n H(+)(out). It carries out the reaction a plastoquinone + NADPH + (n+1) H(+)(in) = a plastoquinol + NADP(+) + n H(+)(out). Functionally, NDH-1 shuttles electrons from an unknown electron donor, via FMN and iron-sulfur (Fe-S) centers, to quinones in the respiratory and/or the photosynthetic chain. The immediate electron acceptor for the enzyme in this species is believed to be plastoquinone. Couples the redox reaction to proton translocation, and thus conserves the redox energy in a proton gradient. Cyanobacterial NDH-1 also plays a role in inorganic carbon-concentration. This is NAD(P)H-quinone oxidoreductase subunit L from Prochlorococcus marinus subsp. pastoris (strain CCMP1986 / NIES-2087 / MED4).